The chain runs to 222 residues: Uracil-DNA glycosylase (222 aa).

The Proton acceptor role is filled by Asp-66.

This sequence belongs to the uracil-DNA glycosylase (UDG) superfamily. UNG family.

It localises to the cytoplasm. The catalysed reaction is Hydrolyzes single-stranded DNA or mismatched double-stranded DNA and polynucleotides, releasing free uracil.. Functionally, excises uracil residues from the DNA which can arise as a result of misincorporation of dUMP residues by DNA polymerase or due to deamination of cytosine. The chain is Uracil-DNA glycosylase from Porphyromonas gingivalis (strain ATCC 33277 / DSM 20709 / CIP 103683 / JCM 12257 / NCTC 11834 / 2561).